Consider the following 179-residue polypeptide: Pyridoxal 5'-phosphate synthase subunit PdxT (179 aa).

48 to 50 (GES) is an L-glutamine binding site. C79 (nucleophile) is an active-site residue. L-glutamine contacts are provided by residues R101 and 127-128 (IR). Residues H163 and E165 each act as charge relay system in the active site.

The protein belongs to the glutaminase PdxT/SNO family. In the presence of PdxS, forms a dodecamer of heterodimers. Only shows activity in the heterodimer.

The catalysed reaction is aldehydo-D-ribose 5-phosphate + D-glyceraldehyde 3-phosphate + L-glutamine = pyridoxal 5'-phosphate + L-glutamate + phosphate + 3 H2O + H(+). The enzyme catalyses L-glutamine + H2O = L-glutamate + NH4(+). The protein operates within cofactor biosynthesis; pyridoxal 5'-phosphate biosynthesis. Its function is as follows. Catalyzes the hydrolysis of glutamine to glutamate and ammonia as part of the biosynthesis of pyridoxal 5'-phosphate. The resulting ammonia molecule is channeled to the active site of PdxS. This Francisella philomiragia subsp. philomiragia (strain ATCC 25017 / CCUG 19701 / FSC 153 / O#319-036) protein is Pyridoxal 5'-phosphate synthase subunit PdxT.